A 548-amino-acid polypeptide reads, in one-letter code: Chaperonin GroEL 2 (548 aa).

ATP-binding positions include 29 to 32, 86 to 90, Gly-418, 482 to 484, and Asp-498; these read TLGP, DGTTT, and NAA.

It belongs to the chaperonin (HSP60) family. As to quaternary structure, forms a cylinder of 14 subunits composed of two heptameric rings stacked back-to-back. Interacts with the co-chaperonin GroES.

Its subcellular location is the cytoplasm. The catalysed reaction is ATP + H2O + a folded polypeptide = ADP + phosphate + an unfolded polypeptide.. Together with its co-chaperonin GroES, plays an essential role in assisting protein folding. The GroEL-GroES system forms a nano-cage that allows encapsulation of the non-native substrate proteins and provides a physical environment optimized to promote and accelerate protein folding. The protein is Chaperonin GroEL 2 of Corynebacterium glutamicum (strain ATCC 13032 / DSM 20300 / JCM 1318 / BCRC 11384 / CCUG 27702 / LMG 3730 / NBRC 12168 / NCIMB 10025 / NRRL B-2784 / 534).